A 387-amino-acid chain; its full sequence is Phosphoglycerate kinase (387 aa).

Residues 21 to 23 (DLN), Arg36, 59 to 62 (HLGR), Arg113, and Arg146 contribute to the substrate site. Residues Lys197, Glu314, and 340-343 (GGDT) contribute to the ATP site.

The protein belongs to the phosphoglycerate kinase family. Monomer.

The protein resides in the cytoplasm. The catalysed reaction is (2R)-3-phosphoglycerate + ATP = (2R)-3-phospho-glyceroyl phosphate + ADP. Its pathway is carbohydrate degradation; glycolysis; pyruvate from D-glyceraldehyde 3-phosphate: step 2/5. In Pseudomonas fluorescens (strain ATCC BAA-477 / NRRL B-23932 / Pf-5), this protein is Phosphoglycerate kinase.